The primary structure comprises 226 residues: Probable endonuclease LCL3 (226 aa).

A helical membrane pass occupies residues 15 to 32 (VFYTSILTGGILSSFYVY). Residues 53–212 (RTLFGRVTSV…RKKKIGMFQQ (160 aa)) form the TNase-like domain. Residue arginine 103 is part of the active site. Residue aspartate 108 participates in Ca(2+) binding. Residues glutamate 111 and arginine 151 contribute to the active site.

It belongs to the LCL3 family.

It localises to the mitochondrion. It is found in the membrane. The sequence is that of Probable endonuclease LCL3 (LCL3) from Yarrowia lipolytica (strain CLIB 122 / E 150) (Yeast).